The following is a 1012-amino-acid chain: Klotho (1012 aa).

An N-terminal signal peptide occupies residues 1-33 (MPASAPPRRPRPPPPSLSLLLVLLGLGGRRLRA). The Extracellular portion of the chain corresponds to 34–981 (EPGDGAQTWA…ECSFFHTRKS (948 aa)). 2 glycosyl hydrolase-1 regions span residues 57 to 506 (FQGT…KNGF) and 515 to 953 (LEGT…SNGF). N-linked (GlcNAc...) asparagine glycosylation is found at N106, N159, N283, N344, N607, N612, and N694. Residues 982-1002 (LLAFIAFLFFASIISLSLIFY) traverse the membrane as a helical segment. The Cytoplasmic portion of the chain corresponds to 1003-1012 (YSKKGRRSYK).

The protein belongs to the glycosyl hydrolase 1 family. Klotho subfamily. As to quaternary structure, homodimer. Interacts with FGF23 and FGFR1. In terms of processing, N-glycosylated. Present in cortical renal tubules (at protein level). Soluble peptide is present in serum and cerebrospinal fluid. Expressed in kidney, placenta, small intestine and prostate. Down-regulated in renal cell carcinomas, hepatocellular carcinomas, and in chronic renal failure kidney.

It localises to the cell membrane. The protein localises to the apical cell membrane. Its subcellular location is the secreted. It carries out the reaction a beta-D-glucuronoside + H2O = D-glucuronate + an alcohol. May have weak glycosidase activity towards glucuronylated steroids. However, it lacks essential active site Glu residues at positions 239 and 872, suggesting it may be inactive as a glycosidase in vivo. May be involved in the regulation of calcium and phosphorus homeostasis by inhibiting the synthesis of active vitamin D. Essential factor for the specific interaction between FGF23 and FGFR1. Its function is as follows. The Klotho peptide generated by cleavage of the membrane-bound isoform may be an anti-aging circulating hormone which would extend life span by inhibiting insulin/IGF1 signaling. This chain is Klotho (KL), found in Homo sapiens (Human).